We begin with the raw amino-acid sequence, 159 residues long: Cytochrome c-type biogenesis protein CcmE (159 aa).

The Cytoplasmic segment spans residues 1–8 (MNIRRKNR). A helical; Signal-anchor for type II membrane protein transmembrane segment spans residues 9–29 (LWIACAVLAGLALTIGLVLYA). At 30–159 (LRSNIDLFYT…PASVYKDPAS (130 aa)) the chain is on the periplasmic side. 2 residues coordinate heme: His-130 and Tyr-134. The span at 134 to 147 (YTPPEVEKAMEANH) shows a compositional bias: basic and acidic residues. Residues 134–159 (YTPPEVEKAMEANHRRPASVYKDPAS) are disordered.

Belongs to the CcmE/CycJ family.

Its subcellular location is the cell inner membrane. In terms of biological role, heme chaperone required for the biogenesis of c-type cytochromes. Transiently binds heme delivered by CcmC and transfers the heme to apo-cytochromes in a process facilitated by CcmF and CcmH. The protein is Cytochrome c-type biogenesis protein CcmE of Escherichia coli (strain SMS-3-5 / SECEC).